A 177-amino-acid polypeptide reads, in one-letter code: Putative membrane protein 165 (177 aa).

Residues 1 to 7 (MYLVLLI) lie on the Intravirion side of the membrane. Residues 8-24 (AVILFIIVILMIFLISG) traverse the membrane as a helical segment. Residues 25-166 (LFYPEQEPAL…DPHPALKSKN (142 aa)) lie on the Virion surface side of the membrane.

It belongs to the asfivirus envelope protein p22 family.

It localises to the virion membrane. The protein resides in the host cell membrane. This chain is Putative membrane protein 165, found in African swine fever virus (isolate Pig/Kenya/KEN-50/1950) (ASFV).